Reading from the N-terminus, the 601-residue chain is Probable serine/threonine-protein kinase WNK3 (601 aa).

The Protein kinase domain occupies 34-291 (GRFNEILGKG…ARELLDDPFL (258 aa)). Residues 114–117 (TELF) and lysine 164 each bind ATP. Residue aspartate 181 is the Proton acceptor of the active site. Disordered stretches follow at residues 470–498 (GWRP…PGGA) and 551–601 (ADDD…SEQP). The span at 477-493 (TDDDDDDDLVGGGDDPD) shows a compositional bias: acidic residues. The span at 560-571 (LQGSSSDTGGSN) shows a compositional bias: polar residues. Residues 572–583 (HEQHAMGKDKEV) show a composition bias toward basic and acidic residues.

This sequence belongs to the protein kinase superfamily. Ser/Thr protein kinase family. WNK subfamily.

The enzyme catalyses L-seryl-[protein] + ATP = O-phospho-L-seryl-[protein] + ADP + H(+). The catalysed reaction is L-threonyl-[protein] + ATP = O-phospho-L-threonyl-[protein] + ADP + H(+). This chain is Probable serine/threonine-protein kinase WNK3 (WNK3), found in Oryza sativa subsp. japonica (Rice).